We begin with the raw amino-acid sequence, 507 residues long: ATP synthase subunit alpha (507 aa).

169-176 is an ATP binding site; it reads GDRQTGKT.

Belongs to the ATPase alpha/beta chains family. As to quaternary structure, F-type ATPases have 2 components, CF(1) - the catalytic core - and CF(0) - the membrane proton channel. CF(1) has five subunits: alpha(3), beta(3), gamma(1), delta(1), epsilon(1). CF(0) has three main subunits: a(1), b(2) and c(9-12). The alpha and beta chains form an alternating ring which encloses part of the gamma chain. CF(1) is attached to CF(0) by a central stalk formed by the gamma and epsilon chains, while a peripheral stalk is formed by the delta and b chains. In this bacterium the a and b subunits are transcribed but do not seem to be translated, thus the ATP synthase consists of the alpha, beta, gamma, delta, epsilon and c subunits.

It is found in the cell membrane. The enzyme catalyses ATP + H2O + 4 H(+)(in) = ADP + phosphate + 5 H(+)(out). In terms of biological role, produces ATP from ADP in the presence of a proton gradient across the membrane. The alpha chain is a regulatory subunit. In Moorella thermoacetica (strain ATCC 39073 / JCM 9320), this protein is ATP synthase subunit alpha.